The sequence spans 263 residues: Nuclear egress protein 2 (263 aa).

The Perinuclear space segment spans residues 1–235 (MASGKKLIDQ…STSLTGRCPS (235 aa)). The chain crosses the membrane as a helical span at residues 236-256 (WGAACALLLLSLAVGLMAILA). The Nuclear segment spans residues 257-263 (AKLMQWP).

It belongs to the herpesviridae NEC2 protein family. In terms of assembly, forms a heterohexameric complex with NEC1. Post-translationally, phosphorylated.

The protein localises to the host nucleus inner membrane. Its function is as follows. Plays an essential role in virion nuclear egress, the first step of virion release from infected cell. Within the host nucleus, NEC1 interacts with the newly formed capsid through the vertexes and directs it to the inner nuclear membrane by associating with NEC2. Induces the budding of the capsid at the inner nuclear membrane as well as its envelopment into the perinuclear space. There, the NEC1/NEC2 complex promotes the fusion of the enveloped capsid with the outer nuclear membrane and the subsequent release of the viral capsid into the cytoplasm where it will reach the secondary budding sites in the host Golgi or trans-Golgi network. This is Nuclear egress protein 2 from Connochaetes taurinus (Blue wildebeest).